The chain runs to 190 residues: Probable thymidylate kinase (190 aa).

An ATP-binding site is contributed by 9–16 (GIDGAGKT).

Belongs to the thymidylate kinase family.

The catalysed reaction is dTMP + ATP = dTDP + ADP. This Sulfurisphaera tokodaii (strain DSM 16993 / JCM 10545 / NBRC 100140 / 7) (Sulfolobus tokodaii) protein is Probable thymidylate kinase (tmk1).